A 132-amino-acid chain; its full sequence is UPF0299 membrane protein YohJ (132 aa).

The next 4 membrane-spanning stretches (helical) occupy residues 7–27, 31–51, 63–83, and 93–113; these read IIWQ…AGIF, LLPI…VLLA, GCYV…VGVM, and FGPV…VVSW.

This sequence belongs to the UPF0299 family.

It localises to the cell inner membrane. The sequence is that of UPF0299 membrane protein YohJ from Salmonella arizonae (strain ATCC BAA-731 / CDC346-86 / RSK2980).